Consider the following 297-residue polypeptide: Vacuolar protein sorting-associated protein 26C (297 aa).

Belongs to the VPS26 family. In terms of assembly, component of the commander complex that is essential for endosomal recycling of transmembrane cargos; the commander complex is composed of the CCC subcomplex and the retriever subcomplex. Component of the heterotrimeric retriever complex consisting of VPS26C, VPS29 and VPS35L; within the complex interacts with VPS35L. Interacts with SNX17 (via C-terminus); the interaction is direct and associates SNX17 with the retriever complex. Interacts with SNX31; the interaction is direct.

It is found in the endosome. Its function is as follows. Component of the commander complex that is essential for endosomal recycling of transmembrane cargos; the commander complex is composed of the CCC subcomplex and the retriever subcomplex. Component of the retriever complex, which is a heterotrimeric complex related to retromer cargo-selective complex (CSC) and essential for retromer-independent retrieval and recycling of numerous cargos such as integrin alpha-5/beta-1 (ITGA5:ITGB1). The recruitment of the retriever complex to the endosomal membrane involves CCC and WASH complexes. In the endosomes, drives the retriever and recycling of NxxY-motif-containing cargo proteins by coupling to SNX17, a cargo essential for the homeostatic maintenance of numerous cell surface proteins associated with processes that include cell migration, cell adhesion, nutrient supply and cell signaling. This chain is Vacuolar protein sorting-associated protein 26C, found in Mus musculus (Mouse).